The sequence spans 290 residues: HTH-type transcriptional activator RhaR (290 aa).

In terms of domain architecture, HTH araC/xylS-type spans 179–277; it reads DLIMSALQQS…GMTPRDYRQR (99 aa). 2 DNA-binding regions (H-T-H motif) span residues 196-217 and 244-267; these read ADFC…RQQT and ISDI…TREA.

As to quaternary structure, binds DNA as a dimer.

The protein localises to the cytoplasm. Functionally, activates expression of the rhaSR operon in response to L-rhamnose. This Yersinia pseudotuberculosis serotype O:1b (strain IP 31758) protein is HTH-type transcriptional activator RhaR.